Reading from the N-terminus, the 1388-residue chain is Rho-associated protein kinase 2 (1388 aa).

Residues 1–24 (MSRPPPTGKMPGAPEAAAGDGAGA) form a disordered region. In terms of domain architecture, Protein kinase spans 92–354 (YDVVKVIGRG…VEEIKSASFF (263 aa)). Residues 98 to 106 (IGRGAFGEV) and lysine 121 contribute to the ATP site. Aspartate 214 functions as the Proton acceptor in the catalytic mechanism. One can recognise an AGC-kinase C-terminal domain in the interval 357–425 (DQWNWDNIRE…FRENLLLSDS (69 aa)). An interaction with PPP1R12A region spans residues 363–784 (NIRETAAPVV…LNELLKQKDV (422 aa)). The interaction with NPM1 stretch occupies residues 373-420 (PELSSDIDSSNFDDIEDDKGDVETFPIPKAFVGNQLPFIGFTYFRENL). Threonine 414 bears the Phosphothreonine; by ROCK2 mark. Coiled coils occupy residues 439–1024 (SEES…EKQL) and 1052–1131 (SDTD…IGMD). The region spanning 497-573 (TLRQLEREKA…LDEANALLRT (77 aa)) is the REM-1 domain. The span at 513-530 (AEYQRKADHEADKKRNLE) shows a compositional bias: basic and acidic residues. Residues 513–532 (AEYQRKADHEADKKRNLEND) are disordered. Tyrosine 722 is modified (phosphotyrosine; by SRC). Residues 979–1047 (TSDVANLANE…LAEIMNRKEP (69 aa)) enclose the RhoBD domain. The tract at residues 979–1047 (TSDVANLANE…LAEIMNRKEP (69 aa)) is RHOA binding. Position 1137 is a phosphoserine (serine 1137). In terms of domain architecture, PH spans 1150 to 1349 (ESRLEGWLSL…WVSRLVKKIP (200 aa)). At threonine 1212 the chain carries Phosphothreonine. The Phorbol-ester/DAG-type zinc-finger motif lies at 1260–1315 (GHEFIPTLYHFPTNCEACMKPLWHMFKPPPALECSRCHIKCHKDHMDKKEEIIAPC). The segment at 1345–1388 (VKKIPKKPPAPDPFARSSPRTSMKIQQNQSIRRPSRQLAPNKPS) is disordered. Phosphoserine is present on residues serine 1362 and serine 1374. Over residues 1362–1376 (SPRTSMKIQQNQSIR) the composition is skewed to polar residues.

The protein belongs to the protein kinase superfamily. AGC Ser/Thr protein kinase family. Homodimer. Interacts with IRS1. Interacts with RAF1. Interacts with RHOA (activated by GTP), RHOB, RHOC. Interacts with PPP1R12A. Interacts with EP300. Interacts with CHORDC1. Interacts with BRCA2. Interacts with NPM1; this interaction enhances its activity. Interacts with SORL1. Interacts with PJVK. Mg(2+) is required as a cofactor. In terms of processing, autophosphorylated. Phosphorylation at Tyr-722 reduces its binding to RHOA and is crucial for focal adhesion dynamics. Dephosphorylation by PTPN11 stimulates its RHOA binding activity. Cleaved by granzyme B during apoptosis. This leads to constitutive activation of the kinase and membrane blebbing. Highly expressed in brain, lung, liver, skeletal muscle, kidney and testis.

It is found in the cytoplasm. The protein resides in the cell membrane. It localises to the nucleus. Its subcellular location is the cytoskeleton. The protein localises to the microtubule organizing center. It is found in the centrosome. The enzyme catalyses L-seryl-[protein] + ATP = O-phospho-L-seryl-[protein] + ADP + H(+). It carries out the reaction L-threonyl-[protein] + ATP = O-phospho-L-threonyl-[protein] + ADP + H(+). With respect to regulation, activated by RHOA binding. Inhibited by Y-27632. Functionally, protein kinase which is a key regulator of actin cytoskeleton and cell polarity. Involved in regulation of smooth muscle contraction, actin cytoskeleton organization, stress fiber and focal adhesion formation, neurite retraction, cell adhesion and motility via phosphorylation of ADD1, BRCA2, CNN1, EZR, DPYSL2, EP300, MSN, MYL9/MLC2, NPM1, RDX, PPP1R12A and VIM. Phosphorylates SORL1 and IRF4. Acts as a negative regulator of VEGF-induced angiogenic endothelial cell activation. Positively regulates the activation of p42/MAPK1-p44/MAPK3 and of p90RSK/RPS6KA1 during myogenic differentiation. Plays an important role in the timely initiation of centrosome duplication. Inhibits keratinocyte terminal differentiation. May regulate closure of the eyelids and ventral body wall through organization of actomyosin bundles. Plays a critical role in the regulation of spine and synaptic properties in the hippocampus. Plays a role in placental homeostasis during the perinatal period. Plays an important role in generating the circadian rhythm of the aortic myofilament Ca(2+) sensitivity and vascular contractility by modulating the myosin light chain phosphorylation. The chain is Rho-associated protein kinase 2 (Rock2) from Rattus norvegicus (Rat).